The chain runs to 525 residues: GMP synthase [glutamine-hydrolyzing] (525 aa).

The Glutamine amidotransferase type-1 domain occupies 16-205; it reads PVLVVDFGAQ…LHDFAGLGAD (190 aa). The active-site Nucleophile is Cys-93. Residues His-179 and Glu-181 contribute to the active site. Residues 206–399 form the GMPS ATP-PPase domain; that stretch reads WTAANIAGVL…LGLPEEIVAR (194 aa). 233–239 is a binding site for ATP; sequence SGGVDSA.

In terms of assembly, homodimer.

It carries out the reaction XMP + L-glutamine + ATP + H2O = GMP + L-glutamate + AMP + diphosphate + 2 H(+). Its pathway is purine metabolism; GMP biosynthesis; GMP from XMP (L-Gln route): step 1/1. Functionally, catalyzes the synthesis of GMP from XMP. The sequence is that of GMP synthase [glutamine-hydrolyzing] from Mycolicibacterium paratuberculosis (strain ATCC BAA-968 / K-10) (Mycobacterium paratuberculosis).